Here is a 282-residue protein sequence, read N- to C-terminus: Nudix hydrolase 7 (282 aa).

Residues S101–N233 form the Nudix hydrolase domain. A Nudix box motif is present at residues G139–G160. Mg(2+)-binding residues include E154 and E158.

Belongs to the Nudix hydrolase family. Homodimer. Interacts with RACK1A, GG1 and GG2. The cofactor is Mg(2+). Expressed in stems, leaves, roots, flowers and siliques.

It localises to the nucleus. The protein localises to the cytoplasm. The protein resides in the cell membrane. The enzyme catalyses ADP-D-ribose + H2O = D-ribose 5-phosphate + AMP + 2 H(+). It carries out the reaction NAD(+) + H2O = beta-nicotinamide D-ribonucleotide + AMP + 2 H(+). It catalyses the reaction NADH + H2O = reduced beta-nicotinamide D-ribonucleotide + AMP + 2 H(+). Not inhibited by fluoride. In terms of biological role, mediates the hydrolysis of some nucleoside diphosphate derivatives. Can use both NADH and ADP-ribose as substrates, but not 8-oxo-dGTP, cyclic ADP-ribose, GDP-mannose, UDP-glucose, ATP, or GTP. Exerts negative control of EDS1 signaling. The sequence is that of Nudix hydrolase 7 (NUDT7) from Arabidopsis thaliana (Mouse-ear cress).